The sequence spans 264 residues: Diphthine synthase (264 aa).

Residues Leu-10, Asp-87, Val-90, 115 to 116 (SI), Leu-166, Ala-209, and His-234 contribute to the S-adenosyl-L-methionine site.

The protein belongs to the diphthine synthase family. As to quaternary structure, homodimer.

It catalyses the reaction 2-[(3S)-amino-3-carboxypropyl]-L-histidyl-[translation elongation factor 2] + 3 S-adenosyl-L-methionine = diphthine-[translation elongation factor 2] + 3 S-adenosyl-L-homocysteine + 3 H(+). It participates in protein modification; peptidyl-diphthamide biosynthesis. S-adenosyl-L-methionine-dependent methyltransferase that catalyzes the trimethylation of the amino group of the modified target histidine residue in translation elongation factor 2 (EF-2), to form an intermediate called diphthine. The three successive methylation reactions represent the second step of diphthamide biosynthesis. This Thermococcus gammatolerans (strain DSM 15229 / JCM 11827 / EJ3) protein is Diphthine synthase.